The sequence spans 510 residues: Proline--tRNA ligase (510 aa).

Belongs to the class-II aminoacyl-tRNA synthetase family. ProS type 3 subfamily. As to quaternary structure, homodimer.

The protein localises to the cytoplasm. It catalyses the reaction tRNA(Pro) + L-proline + ATP = L-prolyl-tRNA(Pro) + AMP + diphosphate. Its function is as follows. Catalyzes the attachment of proline to tRNA(Pro) in a two-step reaction: proline is first activated by ATP to form Pro-AMP and then transferred to the acceptor end of tRNA(Pro). The polypeptide is Proline--tRNA ligase (Sphingomonas elodea).